Consider the following 269-residue polypeptide: Tryptophan synthase alpha chain (269 aa).

Residues Glu-49 and Asp-60 each act as proton acceptor in the active site.

The protein belongs to the TrpA family. In terms of assembly, tetramer of two alpha and two beta chains.

The enzyme catalyses (1S,2R)-1-C-(indol-3-yl)glycerol 3-phosphate + L-serine = D-glyceraldehyde 3-phosphate + L-tryptophan + H2O. Its pathway is amino-acid biosynthesis; L-tryptophan biosynthesis; L-tryptophan from chorismate: step 5/5. The alpha subunit is responsible for the aldol cleavage of indoleglycerol phosphate to indole and glyceraldehyde 3-phosphate. In Histophilus somni (strain 2336) (Haemophilus somnus), this protein is Tryptophan synthase alpha chain.